The chain runs to 183 residues: Bifunctional protein PyrR (183 aa).

Residues 46 to 47 (TR), arginine 87, 107 to 115 (DDVIFSGRT), arginine 140, and valine 164 contribute to the substrate site. A PRPP-binding motif is present at residues 103–115 (VVLVDDVIFSGRT).

The protein belongs to the purine/pyrimidine phosphoribosyltransferase family. PyrR subfamily.

The enzyme catalyses UMP + diphosphate = 5-phospho-alpha-D-ribose 1-diphosphate + uracil. Functionally, regulates the transcription of the pyrimidine nucleotide (pyr) operon in response to exogenous pyrimidines. Its function is as follows. Also displays a weak uracil phosphoribosyltransferase activity which is not physiologically significant. In Thermosynechococcus vestitus (strain NIES-2133 / IAM M-273 / BP-1), this protein is Bifunctional protein PyrR.